The primary structure comprises 946 residues: Leucine--tRNA ligase (946 aa).

Residues 40-51 carry the 'HIGH' region motif; that stretch reads PYPSGAGLHVGH. The 'KMSKS' region motif lies at 719–723; it reads KMSKS. K722 serves as a coordination point for ATP.

This sequence belongs to the class-I aminoacyl-tRNA synthetase family.

The protein resides in the cytoplasm. It carries out the reaction tRNA(Leu) + L-leucine + ATP = L-leucyl-tRNA(Leu) + AMP + diphosphate. This Parabacteroides distasonis (strain ATCC 8503 / DSM 20701 / CIP 104284 / JCM 5825 / NCTC 11152) protein is Leucine--tRNA ligase.